The sequence spans 220 residues: N-(5'-phosphoribosyl)anthranilate isomerase (220 aa).

It belongs to the TrpF family.

The enzyme catalyses N-(5-phospho-beta-D-ribosyl)anthranilate = 1-(2-carboxyphenylamino)-1-deoxy-D-ribulose 5-phosphate. It participates in amino-acid biosynthesis; L-tryptophan biosynthesis; L-tryptophan from chorismate: step 3/5. This chain is N-(5'-phosphoribosyl)anthranilate isomerase, found in Agrobacterium fabrum (strain C58 / ATCC 33970) (Agrobacterium tumefaciens (strain C58)).